Here is a 448-residue protein sequence, read N- to C-terminus: Putative RNA-ligase (448 aa).

The protein belongs to the asfivirus M448R family.

The protein localises to the virion. This African swine fever virus (isolate Pig/Kenya/KEN-50/1950) (ASFV) protein is Putative RNA-ligase.